The primary structure comprises 131 residues: Torsin-1A-interacting protein 2, isoform IFRG15 (131 aa).

The chain is Torsin-1A-interacting protein 2, isoform IFRG15 (TOR1AIP2) from Homo sapiens (Human).